A 228-amino-acid chain; its full sequence is Ribonuclease 3 (228 aa).

An RNase III domain is found at 5–127 (LMALQARLQH…VIGAVYLDAG (123 aa)). Mg(2+) is bound at residue E40. D44 is a catalytic residue. Residues D113 and E116 each contribute to the Mg(2+) site. Residue E116 is part of the active site. In terms of domain architecture, DRBM spans 154 to 224 (DPKTELQEWL…AAAMLQTLKA (71 aa)).

This sequence belongs to the ribonuclease III family. In terms of assembly, homodimer. Mg(2+) serves as cofactor.

The protein localises to the cytoplasm. The enzyme catalyses Endonucleolytic cleavage to 5'-phosphomonoester.. In terms of biological role, digests double-stranded RNA. Involved in the processing of primary rRNA transcript to yield the immediate precursors to the large and small rRNAs (23S and 16S). Processes some mRNAs, and tRNAs when they are encoded in the rRNA operon. Processes pre-crRNA and tracrRNA of type II CRISPR loci if present in the organism. The polypeptide is Ribonuclease 3 (Albidiferax ferrireducens (strain ATCC BAA-621 / DSM 15236 / T118) (Rhodoferax ferrireducens)).